Here is a 605-residue protein sequence, read N- to C-terminus: Replication and transcription activator (605 aa).

Disordered regions lie at residues 307–381 (SLPS…EPEQ) and 447–509 (RIRP…EDPD). The segment covering 321–338 (SADCGDSSSSSSDSGNSD) has biased composition (low complexity). Residues 341 to 353 (QSEREEARAEAPR) show a composition bias toward basic and acidic residues. Over residues 355–364 (RAPKSRRTSR) the composition is skewed to basic residues.

It belongs to the herpesviridae Rta family. Interacts with human ATF7IP protein, leading to promote and regulate host genes in virus-infected cells. Interacts with RNA polymerase III complex; this interaction downregulates small RNA transcription and 5'-pppRNA production.

It localises to the host nucleus. It is found in the virion tegument. Its function is as follows. Immediate-early transcription factor that controls the initiation of viral lytic gene expression and lytic reactivation from latency. Triggers lytic replication, and initiates a cellular senescence program in epithelial cells. Up-regulates human DCR3/TNFRSF6B by directly binding to its receptor. Globally induces a proteasome-dependent loss of SUMOylated proteins in the host cell and the loss of promeylocytic leukemia nuclear bodies. Improves the stability of the triplex capsid protein TRX1 by reducing the ubiquitination level of the latter. Mediates evasion of inflammasome activation and antiviral responses (T- and NK cell activation) during EBV early lytic infection. The polypeptide is Replication and transcription activator (Epstein-Barr virus (strain AG876) (HHV-4)).